A 305-amino-acid chain; its full sequence is N-acetylmuramic acid 6-phosphate etherase (305 aa).

The SIS domain maps to 59–222 (TSKALGKGGR…STGVMVKLGK (164 aa)). E87 (proton donor) is an active-site residue. E118 is a catalytic residue.

Belongs to the GCKR-like family. MurNAc-6-P etherase subfamily. As to quaternary structure, homodimer.

The catalysed reaction is N-acetyl-D-muramate 6-phosphate + H2O = N-acetyl-D-glucosamine 6-phosphate + (R)-lactate. Its pathway is amino-sugar metabolism; N-acetylmuramate degradation. Functionally, specifically catalyzes the cleavage of the D-lactyl ether substituent of MurNAc 6-phosphate, producing GlcNAc 6-phosphate and D-lactate. The polypeptide is N-acetylmuramic acid 6-phosphate etherase (Crocosphaera subtropica (strain ATCC 51142 / BH68) (Cyanothece sp. (strain ATCC 51142))).